Here is a 553-residue protein sequence, read N- to C-terminus: Cytokine-like nuclear factor N-PAC (553 aa).

The PWWP domain occupies 8 to 66 (LGDLVWGKLGRYPPWPGKIVNPPKDLKKPRGKKCFFVKFFGTEDHAWIKVEQLKPYHAH). Basic and acidic residues-rich tracts occupy residues 92-145 (RAKG…EGKK) and 162-182 (RAQE…KDLS). A disordered region spans residues 92 to 190 (RAKGKDQTSS…LSIPESSTVK (99 aa)). S130 carries the phosphoserine modification. K135 is covalently cross-linked (Glycyl lysine isopeptide (Lys-Gly) (interchain with G-Cter in SUMO2)). Phosphoserine is present on S167. The a.T hook DNA-binding region spans 168–180 (PRKRGRPPKDEKD). Residues K176, K179, K201, and K211 each participate in a glycyl lysine isopeptide (Lys-Gly) (interchain with G-Cter in SUMO2) cross-link. Residues 214–217 (DPHF) form an interaction with histone H3 region. The interaction with KDM1B stretch occupies residues 216-225 (HFHHFLLSQT). Glycyl lysine isopeptide (Lys-Gly) (interchain with G-Cter in SUMO2) cross-links involve residues K227, K237, K240, and K269. The tract at residues 261–553 (GSVTPTDKKI…MSAVYRAYIH (293 aa)) is dehydrogenase domain. Residue 271 to 285 (GFLGLGLMGSGIVSN) coordinates NAD(+). Residue K302 forms a Glycyl lysine isopeptide (Lys-Gly) (interchain with G-Cter in SUMO2) linkage. Residues T362 and K505 each coordinate NAD(+). S540 is subject to Phosphoserine.

Belongs to the HIBADH-related family. NP60 subfamily. As to quaternary structure, homotetramere. Interacts with MAPK14. Interacts with KDM1B at nucleosomes; this interaction stimulates H3K4me1 and H3K4me2 demethylation. Binds to mononucleosomes. Interacts with GATA4; the interaction is required for a synergistic activation of GATA4 target genes transcription.

The protein localises to the nucleus. It localises to the chromosome. Functionally, cytokine-like nuclear factor with chromatin gene reader activity involved in chromatin modification and regulation of gene expression. Acts as a nucleosome-destabilizing factor that is recruited to genes during transcriptional activation. Recognizes and binds histone H3 without a preference for specific epigenetic markers and also binds DNA. Interacts with KDM1B and promotes its histone demethylase activity by facilitating the capture of H3 tails, they form a multifunctional enzyme complex that modifies transcribed chromatin and facilitates Pol II transcription through nucleosomes. Stimulates the acetylation of 'Lys-56' of nucleosomal histone H3 (H3K56ac) by EP300. With GATA4, co-binds a defined set of heart development genes and coregulates their expression during cardiomyocyte differentiation. Regulates p38 MAP kinase activity by mediating stress activation of MAPK14/p38alpha and specifically regulating MAPK14 signaling. Indirectly promotes phosphorylation of MAPK14 and activation of ATF2. The phosphorylation of MAPK14 requires upstream activity of MAP2K4 and MAP2K6. This Bos taurus (Bovine) protein is Cytokine-like nuclear factor N-PAC (GLYR1).